Here is a 447-residue protein sequence, read N- to C-terminus: Transcription factor azf1 (447 aa).

2 disordered regions span residues 125 to 155 and 174 to 199; these read HNGA…NEVE and QSPG…PQSY. Residues 127–139 are compositionally biased toward low complexity; that stretch reads GASQQPPGAQSSS. Residues 140–155 are compositionally biased toward polar residues; it reads NEEGAQGKSSSSNEVE. C2H2-type zinc fingers lie at residues 225 to 249, 255 to 279, 285 to 307, and 313 to 338; these read YACT…MRAH, FVCK…QRRH, FSCD…KITH, and FTCL…NKFH. The tract at residues 377-447 is disordered; the sequence is NKGIKGRGKD…EPYFIERQAH (71 aa). Basic and acidic residues predominate over residues 397 to 416; it reads PGSESRRRIEPLSSTDDKMR. The span at 421-431 shows a compositional bias: polar residues; sequence GDTSMYNGGSS.

The protein localises to the nucleus. Functionally, transcription factor that acts as a positive regulator of ochratoxin A (OTA) biosynthesis via controlling the expression of antioxidant genes and oxidative phosphorylation genes. The polypeptide is Transcription factor azf1 (Aspergillus niger (strain ATCC MYA-4892 / CBS 513.88 / FGSC A1513)).